The chain runs to 107 residues: Putative double-stranded DNA mimic protein ECA2319 (107 aa).

It belongs to the putative dsDNA mimic protein family.

Its function is as follows. May act as a double-stranded DNA (dsDNA) mimic. Probably regulates the activity of a dsDNA-binding protein. In Pectobacterium atrosepticum (strain SCRI 1043 / ATCC BAA-672) (Erwinia carotovora subsp. atroseptica), this protein is Putative double-stranded DNA mimic protein ECA2319.